A 127-amino-acid polypeptide reads, in one-letter code: Gamma-synuclein (127 aa).

Repeat copies occupy residues 20 to 30 (EKTKQGVTEAA) and 31 to 41 (EKTKEGVMYVG). A 4 X 11 AA tandem repeats of [EGSA]-K-T-K-[EQ]-[GQ]-V-X(4) region spans residues 20 to 67 (EKTKQGVTEAAEKTKEGVMYVGAKTKEGVVQSVTSVAEKTKEQANAVS). One copy of the 3; approximate repeat lies at 42–56 (AKTKEGVVQSVTSVA). Repeat unit 4 spans residues 57–67 (EKTKEQANAVS). 3 positions are modified to phosphoserine: Ser67, Ser72, and Ser124. Residues 99–127 (ALKQPVPSQEDEAAKAEEQVAEETKSGGD) form a disordered region. A compositionally biased stretch (basic and acidic residues) spans 110 to 127 (EAAKAEEQVAEETKSGGD).

The protein belongs to the synuclein family. As to quaternary structure, may be a centrosome-associated protein. Interacts with MYOC; affects its secretion and its aggregation. Phosphorylated by BARK1 and GRK5. As to expression, predominantly expressed in retina (predominantly in outer nuclear layer, also in inner segment of photoreceptor cells, some individual cells located in the inner nuclear layer, inner plexiform layer and in nerve fiber layer). Also found in brain and heart.

The protein localises to the cytoplasm. It is found in the perinuclear region. It localises to the cytoskeleton. Its subcellular location is the microtubule organizing center. The protein resides in the centrosome. The protein localises to the spindle. Functionally, plays a role in neurofilament network integrity. May be involved in modulating axonal architecture during development and in the adult. In vitro, increases the susceptibility of neurofilament-H to calcium-dependent proteases. May also function in modulating the keratin network in skin. Activates the MAPK and Elk-1 signal transduction pathway. The protein is Gamma-synuclein (SNCG) of Bos taurus (Bovine).